A 450-amino-acid chain; its full sequence is 3-phosphoshikimate 1-carboxyvinyltransferase (450 aa).

The 3-phosphoshikimate site is built by K28, S29, and R33. Residue K28 coordinates phosphoenolpyruvate. Positions 100 and 128 each coordinate phosphoenolpyruvate. 3-phosphoshikimate contacts are provided by S173, Q175, D326, and K353. Q175 is a phosphoenolpyruvate binding site. The Proton acceptor role is filled by D326. Phosphoenolpyruvate contacts are provided by R357 and R402.

It belongs to the EPSP synthase family. Monomer.

The protein localises to the cytoplasm. The catalysed reaction is 3-phosphoshikimate + phosphoenolpyruvate = 5-O-(1-carboxyvinyl)-3-phosphoshikimate + phosphate. The protein operates within metabolic intermediate biosynthesis; chorismate biosynthesis; chorismate from D-erythrose 4-phosphate and phosphoenolpyruvate: step 6/7. In terms of biological role, catalyzes the transfer of the enolpyruvyl moiety of phosphoenolpyruvate (PEP) to the 5-hydroxyl of shikimate-3-phosphate (S3P) to produce enolpyruvyl shikimate-3-phosphate and inorganic phosphate. This chain is 3-phosphoshikimate 1-carboxyvinyltransferase, found in Brucella abortus biovar 1 (strain 9-941).